The sequence spans 123 residues: Glycine cleavage system H protein (123 aa).

The region spanning 22-104 (VATVGITSYA…FGAGWLVKVR (83 aa)) is the Lipoyl-binding domain. K63 carries the N6-lipoyllysine modification.

The protein belongs to the GcvH family. The glycine cleavage system is composed of four proteins: P, T, L and H. (R)-lipoate is required as a cofactor.

Its function is as follows. The glycine cleavage system catalyzes the degradation of glycine. The H protein shuttles the methylamine group of glycine from the P protein to the T protein. The protein is Glycine cleavage system H protein of Clavibacter sepedonicus (Clavibacter michiganensis subsp. sepedonicus).